We begin with the raw amino-acid sequence, 885 residues long: Alanine--tRNA ligase (885 aa).

Histidine 564, histidine 568, cysteine 676, and histidine 680 together coordinate Zn(2+).

It belongs to the class-II aminoacyl-tRNA synthetase family. Zn(2+) is required as a cofactor.

Its subcellular location is the cytoplasm. It catalyses the reaction tRNA(Ala) + L-alanine + ATP = L-alanyl-tRNA(Ala) + AMP + diphosphate. Its function is as follows. Catalyzes the attachment of alanine to tRNA(Ala) in a two-step reaction: alanine is first activated by ATP to form Ala-AMP and then transferred to the acceptor end of tRNA(Ala). Also edits incorrectly charged Ser-tRNA(Ala) and Gly-tRNA(Ala) via its editing domain. This is Alanine--tRNA ligase from Brucella ovis (strain ATCC 25840 / 63/290 / NCTC 10512).